The sequence spans 599 residues: Cytadherence high molecular weight protein 3 (599 aa).

Positions 220–236 (VQVDSGSQNHSFNNSPS) are enriched in polar residues. The segment at 220–241 (VQVDSGSQNHSFNNSPSLKPPL) is disordered.

It localises to the cell projection. Its subcellular location is the attachment organelle membrane. Its function is as follows. Component of the cytoskeleton-like structure which stabilizes the shape of the wall-less mycoplasma. This cytoskeleton-like network of accessory proteins containing HMW proteins 1 to 5 allows the proper anchoring of cytadhesin proteins in the mycoplasmal membrane at the attachment organelle. Essential for successful surface parasitism. The protein is Cytadherence high molecular weight protein 3 (hmw3) of Mycoplasma genitalium (strain ATCC 33530 / DSM 19775 / NCTC 10195 / G37) (Mycoplasmoides genitalium).